The following is a 214-amino-acid chain: Putative AgrB-like protein (214 aa).

5 helical membrane passes run 41-61, 82-102, 109-129, 154-174, and 182-202; these read IISVFIIGLLFNIALEALIFL, CTLLGIIISICIGFLVKSSFF, IIVFIGIVIFVFGYFIVFKFA, ILTIYLFIEILSIILYYNLGW, and LSIILGVAWQCITLTYIGNIL.

It belongs to the AgrB family.

It localises to the cell membrane. May be involved in the proteolytic processing of a quorum sensing system signal molecule precursor. This is Putative AgrB-like protein from Clostridium perfringens (strain SM101 / Type A).